The sequence spans 198 residues: DnaJ homolog subfamily C member 5 (198 aa).

Phosphoserine is present on residues Ser-8, Ser-10, Ser-12, and Ser-15. The region spanning 13 to 82 (GESLYHVLGL…RNIYDKYGSL (70 aa)) is the J domain. Residue Tyr-17 is modified to Phosphotyrosine. At Lys-56 the chain carries N6-acetyllysine. Ser-151 bears the Phosphoserine mark.

In terms of assembly, homodimer. Interacts with the chaperone complex consisting of HSC70 and SGTA. Interacts with ZDHHC13 (via ANK repeats). Interacts with ZDHHC17 (via ANK repeats). Interacts with SYT1, SYT5 and SYT7, and with SYT9, forming a complex with SNAP25. The interaction with SYT9 is stimulated tenfold in presence of calcium. In terms of processing, formation of the chaperone complex DNAJC5/HSC70 is not regulated by phosphorylation. Ser-10 phosphorylation induces an order-to-disorder transition triggering the interaction with Lys-58. This conformational switch modulates DNAJC5's cellular functions by reducing binding to syntaxin and synaptogamin without altering HSC70 interactions. Palmitoylated. Could be palmitoylated by DHHC3, DHHC7, DHHC15 and DHHC17. Palmitoylation occurs probably in the cysteine-rich domain and regulates DNAJC5 membrane attachment.

The protein resides in the cytoplasm. Its subcellular location is the cytosol. It localises to the membrane. It is found in the cytoplasmic vesicle. The protein localises to the secretory vesicle. The protein resides in the chromaffin granule membrane. Its subcellular location is the melanosome. It localises to the cell membrane. Acts as a co-chaperone for the SNARE protein SNAP-25. Involved in the calcium-mediated control of a late stage of exocytosis. Acts as a general chaperone in regulated exocytosis. May have an important role in presynaptic function. May be involved in calcium-dependent neurotransmitter release at nerve endings. This is DnaJ homolog subfamily C member 5 from Mus musculus (Mouse).